The primary structure comprises 167 residues: Small ribosomal subunit protein uS5 (167 aa).

The S5 DRBM domain maps to 19 to 82 (LTEKVLHINR…EAARKNMISC (64 aa)).

It belongs to the universal ribosomal protein uS5 family. Part of the 30S ribosomal subunit. Contacts proteins S4 and S8.

Functionally, with S4 and S12 plays an important role in translational accuracy. Its function is as follows. Located at the back of the 30S subunit body where it stabilizes the conformation of the head with respect to the body. The sequence is that of Small ribosomal subunit protein uS5 from Protochlamydia amoebophila (strain UWE25).